A 349-amino-acid polypeptide reads, in one-letter code: Ion-translocating oxidoreductase complex subunit D (349 aa).

3 helical membrane passes run 20–42, 77–99, and 124–144; these read VMQRVILCLLPGLVVQCAFFGWG, SAMLTAILIGVAIPPLAPWWMIV, and AMAAYVLLLVSFPVQMTTWIA. FMN phosphoryl threonine is present on Thr185. 5 helical membrane-spanning segments follow: residues 212 to 232, 239 to 259, 265 to 285, 291 to 311, and 315 to 335; these read STGVGWFWVNLAYLAGGLVLL, WHISTGVLLGLFVASSIGFLL, ASPLMHLFSGATMLAAFFIAT, ATSPRGRIIFGALIGVLVYII, and GGYPDAFAFAVLLANLCAPFI.

It belongs to the NqrB/RnfD family. In terms of assembly, the complex is composed of six subunits: RnfA, RnfB, RnfC, RnfD, RnfE and RnfG. FMN serves as cofactor.

The protein localises to the cell inner membrane. Part of a membrane-bound complex that couples electron transfer with translocation of ions across the membrane. In Shewanella baltica (strain OS195), this protein is Ion-translocating oxidoreductase complex subunit D.